The following is a 140-amino-acid chain: 3-hydroxyacyl-[acyl-carrier-protein] dehydratase FabZ (140 aa).

Residue histidine 48 is part of the active site.

This sequence belongs to the thioester dehydratase family. FabZ subfamily.

The protein resides in the cytoplasm. The catalysed reaction is a (3R)-hydroxyacyl-[ACP] = a (2E)-enoyl-[ACP] + H2O. Involved in unsaturated fatty acids biosynthesis. Catalyzes the dehydration of short chain beta-hydroxyacyl-ACPs and long chain saturated and unsaturated beta-hydroxyacyl-ACPs. The protein is 3-hydroxyacyl-[acyl-carrier-protein] dehydratase FabZ of Caldicellulosiruptor bescii (strain ATCC BAA-1888 / DSM 6725 / KCTC 15123 / Z-1320) (Anaerocellum thermophilum).